Consider the following 156-residue polypeptide: Maintenance of carboxysome distribution protein B (156 aa).

The segment at 1–55 is required for interaction with McdA:DNA complex; it reads MSNNALDRLINKQKPKVPPRNDVVSESVSNDIKTQGQQELNTSLPPSDTKATPEE. A disordered region spans residues 1 to 79; it reads MSNNALDRLI…QKPKLSPDTF (79 aa). Positions 24–50 are enriched in polar residues; it reads VSESVSNDIKTQGQQELNTSLPPSDTK. A compositionally biased stretch (basic and acidic residues) spans 51 to 63; that stretch reads ATPEEMPTSHESE. Residues 122-156 are a coiled coil; sequence PEELAQVIQLAQERLSQRKAIADYKRAKTMQERFL.

In terms of assembly, homodimerizes; may exist in higher order oligomers in solution. Forms a complex with McdA:DNA. Homohexamerizes, interacts with shell components of the carboxysome.

Its subcellular location is the carboxysome. McdA and McdB together mediate carboxysome (Cb) spacing, size, ultrastructure and probably inheritance in the cell, together they prevent Cb aggregation. McdA is an ATPase that forms dynamic gradients on the nucleoid in response to adapter protein McdB, which associates with carboxysomes. The interplay between McdA gradients on the nucleoid and McdB-bound carboxysomes result in the equal spacing of Cbs along the cell length. Stimulates the ATPase activity of McdA, causing McdA to be released from DNA. Undergoes liquid-liquid phase separation. In terms of biological role, incorrect positioning (aggregation) of carboxysomes results in reduced CO(2) fixation by encapsulated ribulose-1,5-bisphosphate carboxylase (RuBisCO, cbbL/cbbS), which leads to slower growth. This chain is Maintenance of carboxysome distribution protein B, found in Gloeothece citriformis (strain PCC 7424) (Cyanothece sp. (strain PCC 7424)).